The following is a 124-amino-acid chain: Acidic phospholipase A2 BA2 (124 aa).

Cystine bridges form between Cys-26-Cys-116, Cys-28-Cys-44, Cys-43-Cys-95, Cys-49-Cys-124, Cys-50-Cys-88, Cys-57-Cys-81, and Cys-75-Cys-86. 3 residues coordinate Ca(2+): Tyr-27, Gly-29, and Gly-31. His-47 is a catalytic residue. Residue Asp-48 coordinates Ca(2+). Asp-89 is a catalytic residue.

It belongs to the phospholipase A2 family. Group II subfamily. D49 sub-subfamily. The cofactor is Ca(2+). As to expression, expressed by the venom gland.

The protein localises to the secreted. The catalysed reaction is a 1,2-diacyl-sn-glycero-3-phosphocholine + H2O = a 1-acyl-sn-glycero-3-phosphocholine + a fatty acid + H(+). Its function is as follows. PLA2 catalyzes the calcium-dependent hydrolysis of the 2-acyl groups in 3-sn-phosphoglycerides. The chain is Acidic phospholipase A2 BA2 from Gloydius halys (Chinese water mocassin).